Consider the following 207-residue polypeptide: Holliday junction branch migration complex subunit RuvA (207 aa).

The tract at residues 1 to 63 (MIDSLHGEVL…DDGIDLYAFE (63 aa)) is domain I. Residues 64–142 (SDEARQMFAM…VFDSGDSASE (79 aa)) are domain II. Positions 143–154 (PQSGVGGNSEAE) are flexible linker. The interval 155-207 (VDSGVVGTVTQALVELGFPEKQAEKTATSAAAEGGSVSEILKRALRSMSSERN) is domain III.

Belongs to the RuvA family. As to quaternary structure, homotetramer. Forms an RuvA(8)-RuvB(12)-Holliday junction (HJ) complex. HJ DNA is sandwiched between 2 RuvA tetramers; dsDNA enters through RuvA and exits via RuvB. An RuvB hexamer assembles on each DNA strand where it exits the tetramer. Each RuvB hexamer is contacted by two RuvA subunits (via domain III) on 2 adjacent RuvB subunits; this complex drives branch migration. In the full resolvosome a probable DNA-RuvA(4)-RuvB(12)-RuvC(2) complex forms which resolves the HJ.

It localises to the cytoplasm. In terms of biological role, the RuvA-RuvB-RuvC complex processes Holliday junction (HJ) DNA during genetic recombination and DNA repair, while the RuvA-RuvB complex plays an important role in the rescue of blocked DNA replication forks via replication fork reversal (RFR). RuvA specifically binds to HJ cruciform DNA, conferring on it an open structure. The RuvB hexamer acts as an ATP-dependent pump, pulling dsDNA into and through the RuvAB complex. HJ branch migration allows RuvC to scan DNA until it finds its consensus sequence, where it cleaves and resolves the cruciform DNA. This is Holliday junction branch migration complex subunit RuvA from Corynebacterium kroppenstedtii (strain DSM 44385 / JCM 11950 / CIP 105744 / CCUG 35717).